The sequence spans 416 residues: Multifunctional CCA protein (416 aa).

ATP-binding residues include Gly8 and Arg11. CTP-binding residues include Gly8 and Arg11. The Mg(2+) site is built by Glu21 and Asp23. Positions 91, 137, and 140 each coordinate ATP. Arg91, Arg137, and Arg140 together coordinate CTP. In terms of domain architecture, HD spans 228-329 (TGIHTLMVLK…LKLFDAVDAW (102 aa)).

Belongs to the tRNA nucleotidyltransferase/poly(A) polymerase family. Bacterial CCA-adding enzyme type 1 subfamily. In terms of assembly, monomer. Can also form homodimers and oligomers. The cofactor is Mg(2+). Ni(2+) is required as a cofactor.

It carries out the reaction a tRNA precursor + 2 CTP + ATP = a tRNA with a 3' CCA end + 3 diphosphate. The enzyme catalyses a tRNA with a 3' CCA end + 2 CTP + ATP = a tRNA with a 3' CCACCA end + 3 diphosphate. Catalyzes the addition and repair of the essential 3'-terminal CCA sequence in tRNAs without using a nucleic acid template. Adds these three nucleotides in the order of C, C, and A to the tRNA nucleotide-73, using CTP and ATP as substrates and producing inorganic pyrophosphate. tRNA 3'-terminal CCA addition is required both for tRNA processing and repair. Also involved in tRNA surveillance by mediating tandem CCA addition to generate a CCACCA at the 3' terminus of unstable tRNAs. While stable tRNAs receive only 3'-terminal CCA, unstable tRNAs are marked with CCACCA and rapidly degraded. This is Multifunctional CCA protein from Photorhabdus laumondii subsp. laumondii (strain DSM 15139 / CIP 105565 / TT01) (Photorhabdus luminescens subsp. laumondii).